We begin with the raw amino-acid sequence, 268 residues long: Proenkephalin-A (268 aa).

An N-terminal signal peptide occupies residues 1–24 (MARFLRLCTWLLVLGSCLLATVQA). Disulfide bonds link cysteine 26-cysteine 48, cysteine 30-cysteine 52, and cysteine 33-cysteine 65. Residues 162–185 (GTGDNRAREGRHQESTDNDDNMSK) are disordered. Positions 166-176 (NRAREGRHQES) are enriched in basic and acidic residues. 2 propeptides span residues 197–208 (SPQVEDEAKELQ) and 218–228 (VGRPEWWMDYQ). Position 252 is a phosphoserine (serine 252).

The protein belongs to the opioid neuropeptide precursor family. Proenkephalin-A is cleaved by CTSL to generate Met-enkephalin. Post-translationally, processed and degraded by ACE. In terms of processing, probably cleaved by ACE. Processed by ACE to generate Met-enkephalin in the nucleus accumbens of the brain. Post-translationally, the N-terminal domain contains 6 conserved cysteines thought to be involved in disulfide bonding and/or processing.

The protein localises to the cytoplasmic vesicle. It localises to the secretory vesicle. It is found in the chromaffin granule lumen. Its subcellular location is the secreted. Functionally, neuropeptide that competes with and mimic the effects of opiate drugs. They play a role in a number of physiologic functions, including pain perception and responses to stress. Met-enkephalin-Arg-Phe neuropeptide acts as a strong ligand of Mu-type opioid receptor OPRM1. Met-enkephalin-Arg-Phe-binding to OPRM1 in the nucleus accumbens of the brain increases activation of OPRM1, leading to long-term synaptic depression of glutamate release. In terms of biological role, increases glutamate release in the striatum and decreases GABA concentration in the striatum. Its function is as follows. Increases glutamate release in the striatum. The sequence is that of Proenkephalin-A (PENK) from Mesocricetus auratus (Golden hamster).